The primary structure comprises 412 residues: Lysosomal phospholipase A and acyltransferase (412 aa).

An N-terminal signal peptide occupies residues 1-33 (MDRHLCTCRETQLRSGLLLPLFLLMMLADLTLP). Asp-46 contributes to the substrate binding site. Cys-65 and Cys-89 are oxidised to a cystine. Asn-99 is a glycosylation site (N-linked (GlcNAc...) asparagine). Ser-198 functions as the Acyl-ester intermediate in the catalytic mechanism. Ser-198 contacts Zn(2+). Met-199 contacts substrate. Residues Asn-273 and Asn-289 are each glycosylated (N-linked (GlcNAc...) asparagine). Residue Cys-355 participates in Zn(2+) binding. Active-site charge relay system residues include Asp-360 and His-392. Residue His-392 participates in Zn(2+) binding. N-linked (GlcNAc...) asparagine glycosylation occurs at Asn-398.

This sequence belongs to the AB hydrolase superfamily. Lipase family. In terms of processing, N-glycosylated. N-glycosylation is important for maturation of the enzyme and normal subcellular location. As to expression, detected in blood plasma. Detected in alveolar macrophages (at protein level). Detected in heart, liver, spleen, kidney, thymus, brain and lung.

It is found in the secreted. Its subcellular location is the lysosome. It localises to the membrane. The enzyme catalyses a 1,2-diacyl-sn-glycero-3-phosphocholine + H2O = a 2-acyl-sn-glycero-3-phosphocholine + a fatty acid + H(+). It carries out the reaction 1-hexadecanoyl-2-(9Z-octadecenoyl)-sn-glycero-3-phosphocholine + H2O = 2-(9Z-octadecenoyl)-sn-glycero-3-phosphocholine + hexadecanoate + H(+). The catalysed reaction is 1,2-di-(9Z-octadecenoyl)-sn-glycero-3-phosphocholine + H2O = 2-(9Z-octadecenoyl)-sn-glycero-3-phosphocholine + (9Z)-octadecenoate + H(+). It catalyses the reaction 1-hexadecanoyl-2-glutaroyl-sn-glycero-3-phosphocholine + H2O = 2-glutaroyl-sn-glycero-3-phosphocholine + hexadecanoate + H(+). The enzyme catalyses 1-hexadecanoyl-2-nonadioyl-sn-glycero-3-phosphocholine + H2O = 2-nonadioyl-sn-glycero-3-phosphocholine + hexadecanoate + H(+). It carries out the reaction 1-hexadecanoyl-2-(5-oxopentanoyl)-sn-glycero-3-phosphocholine + H2O = 2-(5-oxopentanoyl)-sn-glycero-3-phosphocholine + hexadecanoate + H(+). The catalysed reaction is 1-hexadecanoyl-2-(9-oxononanoyl)-sn-glycero-3-phosphocholine + H2O = 2-(9-oxononanoyl)-sn-glycero-3-phosphocholine + hexadecanoate + H(+). It catalyses the reaction 1,2-dihexadecanoyl-sn-glycero-3-phosphocholine + H2O = 2-hexadecanoyl-sn-glycero-3-phosphocholine + hexadecanoate + H(+). The enzyme catalyses a 1,2-diacyl-sn-glycero-3-phosphocholine + H2O = a 1-acyl-sn-glycero-3-phosphocholine + a fatty acid + H(+). It carries out the reaction 1-hexadecanoyl-2-(9Z-octadecenoyl)-sn-glycero-3-phosphocholine + H2O = 1-hexadecanoyl-sn-glycero-3-phosphocholine + (9Z)-octadecenoate + H(+). The catalysed reaction is 1,2-di-(9Z-octadecenoyl)-sn-glycero-3-phosphocholine + H2O = 1-(9Z-octadecenoyl)-sn-glycero-3-phosphocholine + (9Z)-octadecenoate + H(+). It catalyses the reaction 1,2-dihexadecanoyl-sn-glycero-3-phosphocholine + H2O = 1-hexadecanoyl-sn-glycero-3-phosphocholine + hexadecanoate + H(+). The enzyme catalyses a 1-acyl-sn-glycero-3-phosphocholine + H2O = sn-glycerol 3-phosphocholine + a fatty acid + H(+). It carries out the reaction 1-hexadecanoyl-sn-glycero-3-phosphocholine + H2O = sn-glycerol 3-phosphocholine + hexadecanoate + H(+). The catalysed reaction is N-(acetyl)-sphing-4-enine + a 1,2-diacyl-sn-glycero-3-phosphoethanolamine = 1-O-acyl-N-(acetyl)-sphing-4-enine + a 2-acyl-sn-glycero-3-phosphoethanolamine. It catalyses the reaction 1-hexadecanoyl-2-(9Z-octadecenoyl)-sn-glycero-3-phosphoethanolamine + N-(acetyl)-sphing-4-enine = 2-(9Z-octadecenoyl)-sn-glycero-3-phosphoethanolamine + 1-hexadecanoyl-N-(acetyl)-sphing-4-enine. The enzyme catalyses 1-hexadecanoyl-2-(9Z,12Z-octadecadienoyl)-sn-glycero-3-phosphoethanolamine + N-(acetyl)-sphing-4-enine = 2-(9Z,12Z)-octadecadienoyl-sn-glycero-3-phosphoethanolamine + 1-hexadecanoyl-N-(acetyl)-sphing-4-enine. It carries out the reaction 1-hexadecanoyl-2-(5Z,8Z,11Z,14Z-eicosatetraenoyl)-sn-glycero-3-phosphoethanolamine + N-(acetyl)-sphing-4-enine = 2-(5Z,8Z,11Z,14Z)-eicosatetraenoyl-sn-glycero-3-phosphoethanolamine + 1-hexadecanoyl-N-(acetyl)-sphing-4-enine. The catalysed reaction is N-(acetyl)-sphing-4-enine + a 1,2-diacyl-sn-glycero-3-phosphoethanolamine = 1-O-acyl-N-(acetyl)-sphing-4-enine + a 1-acyl-sn-glycero-3-phosphoethanolamine. It catalyses the reaction 1-hexadecanoyl-2-(9Z-octadecenoyl)-sn-glycero-3-phosphoethanolamine + N-(acetyl)-sphing-4-enine = 1-(9Z-octadecenoyl)-N-(acetyl)-sphing-4-enine + 1-hexadecanoyl-sn-glycero-3-phosphoethanolamine. The enzyme catalyses 1-hexadecanoyl-2-(9Z,12Z-octadecadienoyl)-sn-glycero-3-phosphoethanolamine + N-(acetyl)-sphing-4-enine = 1-(9Z,12Z-octadecadienoyl)-N-acetylsphing-4-enine + 1-hexadecanoyl-sn-glycero-3-phosphoethanolamine. It carries out the reaction 1-hexadecanoyl-2-(5Z,8Z,11Z,14Z-eicosatetraenoyl)-sn-glycero-3-phosphoethanolamine + N-(acetyl)-sphing-4-enine = 1-(5Z,8Z,11Z,14Z)-eicosatetraenoyl-N-(acetyl)-sphing-4-enine + 1-hexadecanoyl-sn-glycero-3-phosphoethanolamine. The catalysed reaction is N-(acetyl)-sphing-4-enine + a 1,2-diacyl-sn-glycero-3-phosphocholine = 1-O-acyl-N-(acetyl)-sphing-4-enine + a 2-acyl-sn-glycero-3-phosphocholine. It catalyses the reaction 1-hexadecanoyl-2-(9Z-octadecenoyl)-sn-glycero-3-phosphocholine + N-(acetyl)-sphing-4-enine = 1-hexadecanoyl-N-(acetyl)-sphing-4-enine + 2-(9Z-octadecenoyl)-sn-glycero-3-phosphocholine. The enzyme catalyses 1-hexadecanoyl-2-(9Z,12Z-octadecadienoyl)-sn-glycero-3-phosphocholine + N-(acetyl)-sphing-4-enine = 2-(9Z,12Z-octadecadienoyl)-sn-glycero-3-phosphocholine + 1-hexadecanoyl-N-(acetyl)-sphing-4-enine. It carries out the reaction 1-hexadecanoyl-2-(5Z,8Z,11Z,14Z-eicosatetraenoyl)-sn-glycero-3-phosphocholine + N-(acetyl)-sphing-4-enine = 1-hexadecanoyl-N-(acetyl)-sphing-4-enine + 2-(5Z,8Z,11Z,14Z)-eicosatetraenoyl-sn-glycero-3-phosphocholine. The catalysed reaction is 1-hexadecanoyl-2-(4Z,7Z,10Z,13Z,16Z,19Z-docosahexaenoyl)-sn-glycero-3-phosphocholine + N-(acetyl)-sphing-4-enine = 2-(4Z,7Z,10Z,13Z,16Z,19Z-docosahexaenoyl)-sn-glycero-3-phosphocholine + 1-hexadecanoyl-N-(acetyl)-sphing-4-enine. It catalyses the reaction 1-hexadecanoyl-2-nonadioyl-sn-glycero-3-phosphocholine + N-(acetyl)-sphing-4-enine = 2-nonadioyl-sn-glycero-3-phosphocholine + 1-hexadecanoyl-N-(acetyl)-sphing-4-enine. The enzyme catalyses 1-octadecanoyl-2-(9Z-octadecenoyl)-sn-glycero-3-phosphocholine + N-(acetyl)-sphing-4-enine = 1-octadecanoyl-N-(acetyl)-sphing-4-enine + 2-(9Z-octadecenoyl)-sn-glycero-3-phosphocholine. It carries out the reaction 1-(9Z)-octadecenoyl-2-octadecanoyl-sn-glycero-3-phosphocholine + N-(acetyl)-sphing-4-enine = 2-octadecanoyl-sn-glycero-3-phosphocholine + 1-(9Z-octadecenoyl)-N-(acetyl)-sphing-4-enine. The catalysed reaction is 1-octadecanoyl-2-(5Z,8Z,11Z,14Z-eicosatetraenoyl)-sn-glycero-3-phosphocholine + N-(acetyl)-sphing-4-enine = 1-octadecanoyl-N-(acetyl)-sphing-4-enine + 2-(5Z,8Z,11Z,14Z)-eicosatetraenoyl-sn-glycero-3-phosphocholine. It catalyses the reaction 1-(9Z-octadecenoyl)-2-hexadecanoyl-sn-glycero-3-phosphocholine + N-(acetyl)-sphing-4-enine = 1-(9Z-octadecenoyl)-N-(acetyl)-sphing-4-enine + 2-hexadecanoyl-sn-glycero-3-phosphocholine. The enzyme catalyses N-(acetyl)-sphing-4-enine + a 1,2-diacyl-sn-glycero-3-phosphocholine = 1-O-acyl-N-(acetyl)-sphing-4-enine + a 1-acyl-sn-glycero-3-phosphocholine. It carries out the reaction 1-hexadecanoyl-2-(9Z-octadecenoyl)-sn-glycero-3-phosphocholine + N-(acetyl)-sphing-4-enine = 1-(9Z-octadecenoyl)-N-(acetyl)-sphing-4-enine + 1-hexadecanoyl-sn-glycero-3-phosphocholine. The catalysed reaction is 1-hexadecanoyl-2-(9Z,12Z-octadecadienoyl)-sn-glycero-3-phosphocholine + N-(acetyl)-sphing-4-enine = 1-(9Z,12Z-octadecadienoyl)-N-acetylsphing-4-enine + 1-hexadecanoyl-sn-glycero-3-phosphocholine. It catalyses the reaction 1-hexadecanoyl-2-(5Z,8Z,11Z,14Z-eicosatetraenoyl)-sn-glycero-3-phosphocholine + N-(acetyl)-sphing-4-enine = 1-(5Z,8Z,11Z,14Z)-eicosatetraenoyl-N-(acetyl)-sphing-4-enine + 1-hexadecanoyl-sn-glycero-3-phosphocholine. The enzyme catalyses 1-hexadecanoyl-2-(4Z,7Z,10Z,13Z,16Z,19Z-docosahexaenoyl)-sn-glycero-3-phosphocholine + N-(acetyl)-sphing-4-enine = 1-(4Z,7Z,10Z,13Z,16Z,19Z-docosahexaenoyl)-N-(acetyl)-sphing-4-enine + 1-hexadecanoyl-sn-glycero-3-phosphocholine. It carries out the reaction 1-octadecanoyl-2-(9Z-octadecenoyl)-sn-glycero-3-phosphocholine + N-(acetyl)-sphing-4-enine = 1-(9Z-octadecenoyl)-N-(acetyl)-sphing-4-enine + 1-octadecanoyl-sn-glycero-3-phosphocholine. The catalysed reaction is 1-octadecanoyl-2-(9Z,12Z)-octadecadienoyl-sn-glycero-3-phosphocholine + N-(acetyl)-sphing-4-enine = 1-(9Z,12Z-octadecadienoyl)-N-acetylsphing-4-enine + 1-octadecanoyl-sn-glycero-3-phosphocholine. It catalyses the reaction 1-(9Z-octadecenoyl)-2-hexadecanoyl-sn-glycero-3-phosphocholine + N-(acetyl)-sphing-4-enine = 1-hexadecanoyl-N-(acetyl)-sphing-4-enine + 1-(9Z-octadecenoyl)-sn-glycero-3-phosphocholine. The enzyme catalyses 1-(9Z)-octadecenoyl-2-octadecanoyl-sn-glycero-3-phosphocholine + N-(acetyl)-sphing-4-enine = 1-octadecanoyl-N-(acetyl)-sphing-4-enine + 1-(9Z-octadecenoyl)-sn-glycero-3-phosphocholine. It carries out the reaction 1,2-di-(9Z-octadecenoyl)-sn-glycero-3-phosphocholine + N-(acetyl)-sphing-4-enine = 1-(9Z-octadecenoyl)-N-(acetyl)-sphing-4-enine + 1-(9Z-octadecenoyl)-sn-glycero-3-phosphocholine. The catalysed reaction is 1-octadecanoyl-2-(5Z,8Z,11Z,14Z-eicosatetraenoyl)-sn-glycero-3-phosphocholine + N-(acetyl)-sphing-4-enine = 1-(5Z,8Z,11Z,14Z)-eicosatetraenoyl-N-(acetyl)-sphing-4-enine + 1-octadecanoyl-sn-glycero-3-phosphocholine. It catalyses the reaction a 1,2-diacyl-sn-glycero-3-phospho-L-serine + N-(acetyl)-sphing-4-enine = a 2-acyl-sn-glycero-3-phospho-L-serine + 1-O-acyl-N-(acetyl)-sphing-4-enine. The enzyme catalyses 1-octadecanoyl-2-(9Z-octadecenoyl)-sn-glycero-3-phospho-L-serine + N-(acetyl)-sphing-4-enine = 2-(9Z-octadecenoyl)-sn-glycero-3-phospho-L-serine + 1-octadecanoyl-N-(acetyl)-sphing-4-enine. It carries out the reaction a 1,2-diacyl-sn-glycero-3-phospho-L-serine + N-(acetyl)-sphing-4-enine = 1-O-acyl-N-(acetyl)-sphing-4-enine + a 1-acyl-sn-glycero-3-phospho-L-serine. The catalysed reaction is 1-octadecanoyl-2-(9Z-octadecenoyl)-sn-glycero-3-phospho-L-serine + N-(acetyl)-sphing-4-enine = 1-octadecanoyl-sn-glycero-3-phosphoserine + 1-(9Z-octadecenoyl)-N-(acetyl)-sphing-4-enine. It catalyses the reaction a 1,2-diacyl-sn-glycero-3-phospho-(1'-sn-glycerol) + N-(acetyl)-sphing-4-enine = 2-acyl-sn-glycero-3-phospho-(1'-sn-glycerol) + 1-O-acyl-N-(acetyl)-sphing-4-enine. The enzyme catalyses 1-octadecanoyl-2-(9Z-octadecenoyl)-sn-glycero-3-phospho-(1'-sn-glycerol) + N-(acetyl)-sphing-4-enine = 2-(9Z-octadecenoyl)-sn-glycero-3-phospho-(1'-sn-glycerol) + 1-octadecanoyl-N-(acetyl)-sphing-4-enine. It carries out the reaction a 1,2-diacyl-sn-glycero-3-phospho-(1'-sn-glycerol) + N-(acetyl)-sphing-4-enine = 1-O-acyl-N-(acetyl)-sphing-4-enine + 1-acyl-sn-glycero-3-phospho-(1'-sn-glycerol). The catalysed reaction is 1-octadecanoyl-2-(9Z-octadecenoyl)-sn-glycero-3-phospho-(1'-sn-glycerol) + N-(acetyl)-sphing-4-enine = 1-octadecanoyl-sn-glycero-3-phospho-(1'-sn-glycerol) + 1-(9Z-octadecenoyl)-N-(acetyl)-sphing-4-enine. It catalyses the reaction an N-acylethanolamine + a 1,2-diacyl-sn-glycero-3-phosphocholine = 2-(acylamino)ethyl fatty acid + a 2-acyl-sn-glycero-3-phosphocholine. The enzyme catalyses an N-acylethanolamine + a 1,2-diacyl-sn-glycero-3-phosphocholine = 2-(acylamino)ethyl fatty acid + a 1-acyl-sn-glycero-3-phosphocholine. It carries out the reaction N-(5Z,8Z,11Z,14Z-eicosatetraenoyl)-ethanolamine + 1,2-di-(9Z-octadecenoyl)-sn-glycero-3-phosphocholine = 2-[(5Z,8Z,11Z,14Z)-eicosatetraenoylamino]ethyl (9Z)-octadecenoate + (9Z-octadecenoyl)-sn-glycero-3-phosphocholine. The catalysed reaction is N-(9Z-octadecenoyl) ethanolamine + 1,2-di-(9Z-octadecenoyl)-sn-glycero-3-phosphocholine = 2-[(9Z)-octadecenoylamino]ethyl (9Z)-octadecenoate + (9Z-octadecenoyl)-sn-glycero-3-phosphocholine. It catalyses the reaction a 3-acyl-sn-glycerol + a 1,2-diacyl-sn-glycero-3-phosphocholine = a 1,3-diacylglycerol + a 1-acyl-sn-glycero-3-phosphocholine. The enzyme catalyses a 3-acyl-sn-glycerol + a 1,2-diacyl-sn-glycero-3-phosphocholine = a 1,3-diacylglycerol + a 2-acyl-sn-glycero-3-phosphocholine. It carries out the reaction 3-(9Z-octadecenoyl)-sn-glycerol + 1,2-di-(9Z-octadecenoyl)-sn-glycero-3-phosphocholine = 1,3-di-(9Z-octadecenoyl)-glycerol + (9Z-octadecenoyl)-sn-glycero-3-phosphocholine. The catalysed reaction is 3-hexadecanoyl-sn-glycerol + 1,2-di-(9Z-octadecenoyl)-sn-glycero-3-phosphocholine = 1-(9Z)-octadecenoyl-3-hexadecanoyl-sn-glycerol + (9Z-octadecenoyl)-sn-glycero-3-phosphocholine. It catalyses the reaction a 1-acyl-sn-glycerol + a 1,2-diacyl-sn-glycero-3-phosphocholine = a 1,3-diacylglycerol + a 2-acyl-sn-glycero-3-phosphocholine. The enzyme catalyses a 1-acyl-sn-glycerol + a 1,2-diacyl-sn-glycero-3-phosphocholine = a 1,3-diacylglycerol + a 1-acyl-sn-glycero-3-phosphocholine. It carries out the reaction 1-(9Z-octadecenoyl)-sn-glycerol + 1,2-di-(9Z-octadecenoyl)-sn-glycero-3-phosphocholine = 1,3-di-(9Z-octadecenoyl)-glycerol + (9Z-octadecenoyl)-sn-glycero-3-phosphocholine. The catalysed reaction is 1-hexadecanoyl-sn-glycerol + 1,2-di-(9Z-octadecenoyl)-sn-glycero-3-phosphocholine = 1-hexadecanoyl-3-(9Z)-octadecenoyl-sn-glycerol + (9Z-octadecenoyl)-sn-glycero-3-phosphocholine. It catalyses the reaction a 2-acylglycerol + a 1,2-diacyl-sn-glycero-3-phosphocholine = a 1,2-diacylglycerol + a 2-acyl-sn-glycero-3-phosphocholine. The enzyme catalyses a 2-acylglycerol + a 1,2-diacyl-sn-glycero-3-phosphocholine = a 1,2-diacylglycerol + a 1-acyl-sn-glycero-3-phosphocholine. It carries out the reaction 2-hexadecanoylglycerol + 1,2-di-(9Z-octadecenoyl)-sn-glycero-3-phosphocholine = 1-(9Z)-octadecenoyl-2-hexadecanoylglycerol + (9Z-octadecenoyl)-sn-glycero-3-phosphocholine. The catalysed reaction is 1-O-alkylglycerol + a 1,2-diacyl-sn-glycero-3-phosphocholine = 1-O-alkyl-3-acylglycerol + a 1-acyl-sn-glycero-3-phosphocholine. It catalyses the reaction 1-O-alkylglycerol + a 1,2-diacyl-sn-glycero-3-phosphocholine = 1-O-alkyl-3-acylglycerol + a 2-acyl-sn-glycero-3-phosphocholine. The enzyme catalyses 1-O-hexadecylglycerol + 1,2-di-(9Z-octadecenoyl)-sn-glycero-3-phosphocholine = 1-O-hexadecyl-3-(9Z)-octadecenoylglycerol + (9Z-octadecenoyl)-sn-glycero-3-phosphocholine. It carries out the reaction 1-O-alkyl-2-acyl-sn-glycerol + a 1,2-diacyl-sn-glycero-3-phosphocholine = 1-O-alkyl-2,3-diacyl-sn-glycerol + a 2-acyl-sn-glycero-3-phosphocholine. The catalysed reaction is 1-O-alkyl-2-acyl-sn-glycerol + a 1,2-diacyl-sn-glycero-3-phosphocholine = 1-O-alkyl-2,3-diacyl-sn-glycerol + a 1-acyl-sn-glycero-3-phosphocholine. It catalyses the reaction 1-O-hexadecyl-2-acetyl-sn-glycerol + 1,2-di-(9Z-octadecenoyl)-sn-glycero-3-phosphocholine = 1-O-hexadecyl-2-acetyl-3-(9Z)-octadecenoyl-sn-glycerol + (9Z-octadecenoyl)-sn-glycero-3-phosphocholine. The enzyme catalyses 1-O-hexadecyl-2-O-methyl-sn-glycerol + 1,2-di-(9Z-octadecenoyl)-sn-glycero-3-phosphocholine = 1-O-hexadecyl-2-O-methyl-3-(9Z)-octadecenoyl-sn-glycerol + (9Z-octadecenoyl)-sn-glycero-3-phosphocholine. It carries out the reaction a 1,2-diacyl-sn-glycero-3-phosphoethanolamine + H2O = a 1-acyl-sn-glycero-3-phosphoethanolamine + a fatty acid + H(+). The catalysed reaction is 1-acyl-2-(5Z,8Z,11Z,14Z)-eicosatetraenoyl-sn-glycero-3-phosphoethanolamine + H2O = a 1-acyl-sn-glycero-3-phosphoethanolamine + (5Z,8Z,11Z,14Z)-eicosatetraenoate + H(+). It catalyses the reaction a 1,2-diacyl-sn-glycero-3-phospho-(1'-sn-glycerol) + H2O = 1-acyl-sn-glycero-3-phospho-(1'-sn-glycerol) + a fatty acid + H(+). The enzyme catalyses 1-hexadecanoyl-2-(9Z-octadecenoyl)-sn-glycero-3-phospho-(1'-sn-glycerol) + H2O = 1-hexadecanoyl-sn-glycero-3-phospho-(1'-sn-glycerol) + (9Z)-octadecenoate + H(+). It carries out the reaction a 1,2-diacyl-sn-glycero-3-phospho-(1'-sn-glycerol) + H2O = 2-acyl-sn-glycero-3-phospho-(1'-sn-glycerol) + a fatty acid + H(+). The catalysed reaction is 1-hexadecanoyl-2-(9Z-octadecenoyl)-sn-glycero-3-phospho-(1'-sn-glycerol) + H2O = 2-(9Z-octadecenoyl)-sn-glycero-3-phospho-(1'-sn-glycerol) + hexadecanoate + H(+). With respect to regulation, phospholipase sn-2 versus sn-1 positional specificity is affected by the phospholipid composition of membranes. Phospholipase A2 activity toward 1-hexadecanoyl-2-(5Z,8Z,11Z,14Z-eicosatetraenoyl)-sn-glycero-3-phosphocholine (PAPE) is enhanced in the presence of 1,2-dioleoyl-sn-glycero-3-phosphocholine (DOPC), which promotes lipid bilayer formation. O-acyltransferase activity is inhibited by antiarrhythmic drug amiodarone. Has dual calcium-independent phospholipase and O-acyltransferase activities with a potential role in glycerophospholipid homeostasis and remodeling of acyl groups of lipophilic alcohols present in acidic cellular compartments. Catalyzes hydrolysis of the ester bond of the fatty acyl group attached at sn-1 or sn-2 position of phospholipids (phospholipase A1 or A2 activity) and transfer it to the hydroxyl group at the first carbon of lipophilic alcohols (O-acyltransferase activity). Among preferred fatty acyl donors are phosphatidylcholines, phosphatidylethanolamines, phosphatidylglycerols and phosphatidylserines. Favors sn-2 over sn-1 deacylation of unsaturated fatty acyl groups of phosphatidylcholines, phosphatidylethanolamines, and phosphatidylglycerols. Among preferred fatty acyl acceptors are natural lipophilic alcohols including short-chain ceramide N-acetyl-sphingosine (C2 ceramide), alkylacylglycerols, monoacylglycerols, and acylethanolamides such as anandamide and oleoylethanolamide. Selectively hydrolyzes the sn-1 fatty acyl group of truncated oxidized phospholipids and may play a role in detoxification of reactive oxidized phospholipids during oxidative stress. Required for normal phospholipid degradation in alveolar macrophages with potential implications in the clearance of pulmonary surfactant, which is mainly composed of dipalmitoylphosphatidylcholine (1,2-dihexadecanoyl-sn-glycero-3-phosphocholine). Involved in the first step of bis(monoacylglycero)phosphate (BMP) de novo synthesis from phosphatidylglycerol (1,2-diacyl-sn-glycero-3-phospho-(1'-sn-glycerol), PG). BMP is an important player in cargo sorting and degradation, regulation of cellular cholesterol levels and intercellular communication. At neutral pH, hydrolyzes the sn-1 fatty acyl group of the lysophosphatidylcholines. The chain is Lysosomal phospholipase A and acyltransferase from Mus musculus (Mouse).